The sequence spans 424 residues: UPF0415 protein C7orf25 homolog (424 aa).

Belongs to the UPF0415 family.

This is UPF0415 protein C7orf25 homolog from Xenopus tropicalis (Western clawed frog).